The sequence spans 410 residues: Phosphoglycerate kinase (410 aa).

Residues 22–24 (DIN), Arg39, 62–65 (HQSR), Arg119, and Arg159 each bind substrate. ATP-binding positions include Glu332 and 358–361 (GGHL).

This sequence belongs to the phosphoglycerate kinase family. As to quaternary structure, homodimer.

It localises to the cytoplasm. The catalysed reaction is (2R)-3-phosphoglycerate + ATP = (2R)-3-phospho-glyceroyl phosphate + ADP. It participates in carbohydrate degradation; glycolysis; pyruvate from D-glyceraldehyde 3-phosphate: step 2/5. In Methanothermus fervidus (strain ATCC 43054 / DSM 2088 / JCM 10308 / V24 S), this protein is Phosphoglycerate kinase (pgk).